Reading from the N-terminus, the 551-residue chain is MQEYLIASIQQALLASGIEPPKEITIEKPSNKQFGDFSTNIALTLAKECRKNPRQLAEEISAKLEFRPETVDKTTIAGPGFINFYLTPAFIMQSVEQVLNEGDQFGKTCTGKGQKAIVEYVSANPTGPLTIGRGRGGVLGDCIANLLESQGYKVTREYYFNDAGRQMTILAESVRLRYLECCGEAIAFPDTHYQGDYISDIAAKLFEKHGVELKEVSQLDEFKQIAETYIFASIKNTLHRLNIHHDSFFNEHKLYQTGQNGKSPNEQVIDALDKAGYISNYDGAVWFTTTKLGQEKDKVLIKSTGEPSYRLPDIAYHVTKYERAFSEIINVFGADHIDEYPDVIEALRILGYDPGRIKVAINQFVTTTVNGETVKMSTRKGNADLLDDLIDDVGADATRLFFIMRSKDSHLNFDVELAKKQSRDNPVFYLQYAHARICSLVKLAEQEIGFTQSDIGVHLMQNLDSPHELQLGLALLDFPEVISSAVRMLEPQKMVEYLHHVAELYHRFYQECPILKAEPDICKARLFLSLATRQVLQNGFRILGVTAPTAM.

The 'HIGH' region motif lies at 123–133; the sequence is ANPTGPLTIGR.

This sequence belongs to the class-I aminoacyl-tRNA synthetase family. Monomer.

The protein localises to the cytoplasm. The catalysed reaction is tRNA(Arg) + L-arginine + ATP = L-arginyl-tRNA(Arg) + AMP + diphosphate. The chain is Arginine--tRNA ligase from Prosthecochloris aestuarii (strain DSM 271 / SK 413).